The primary structure comprises 224 residues: MQHPAFYVTGTDTGIGKTMGSTALLHALRARGHRAVGMKPVASGCEHTPHGWRNEDALALQAASDPQPDYAVLNPYALPAPLAPELAAAEVGVTLALEPIVQAFAQLRTQAEVVVVEGVGGWAAPLSATLDQADLVCALQLPVVLVVGVRLGCINHARLTAAAIAADGLQCIGWIANEVDPQMERIEENIGMLRQRLAMPYWGRIPWRPGADAATQAHGLQLPR.

Mg(2+) is bound at residue T18. K39 is a catalytic residue. S43 serves as a coordination point for substrate. Mg(2+) contacts are provided by D56 and E117. Residues D56, 117 to 120 (EGVG), and 177 to 178 (NE) contribute to the ATP site.

The protein belongs to the dethiobiotin synthetase family. As to quaternary structure, homodimer. It depends on Mg(2+) as a cofactor.

The protein localises to the cytoplasm. The enzyme catalyses (7R,8S)-7,8-diammoniononanoate + CO2 + ATP = (4R,5S)-dethiobiotin + ADP + phosphate + 3 H(+). Its pathway is cofactor biosynthesis; biotin biosynthesis; biotin from 7,8-diaminononanoate: step 1/2. In terms of biological role, catalyzes a mechanistically unusual reaction, the ATP-dependent insertion of CO2 between the N7 and N8 nitrogen atoms of 7,8-diaminopelargonic acid (DAPA, also called 7,8-diammoniononanoate) to form a ureido ring. In Xanthomonas axonopodis pv. citri (strain 306), this protein is ATP-dependent dethiobiotin synthetase BioD.